The sequence spans 123 residues: Secreted LysM effector Lys1 (123 aa).

Positions 1 to 20 are cleaved as a signal peptide; the sequence is MMGLAKTLLLASQLTAVVVA. The region spanning 72–118 is the LysM domain; sequence KFCWVQAGNKCYQVAMENHISLADFLKWNPGAGSDCRTLWANTYACV.

Belongs to the secreted LysM effector family.

Functionally, might have a role in sequestration of chitin oligosaccharides (breakdown products of fungal cell walls that are released during invasion and act as triggers of host immunity) to dampen host defense. This is Secreted LysM effector Lys1 from Pochonia chlamydosporia (strain 123) (Metacordyceps chlamydosporia).